Here is a 165-residue protein sequence, read N- to C-terminus: E3 ubiquitin ligase complex SCF subunit sconC (165 aa).

An interaction with the F-box domain of F-box proteins region spans residues 106–165 (ILAANYLDIKALLDVGCKTVANMIKGKSPEEIRKTFNIQNDFTPEEEDQIRRENEWAEDR).

The protein belongs to the SKP1 family. Component of the SCF (SKP1-CUL1-F-box protein) E3 ubiquitin ligase complexes.

Its pathway is protein modification; protein ubiquitination. In terms of biological role, essential component of the SCF (SKP1-CUL1-F-box protein) E3 ubiquitin ligase complexes, which mediate the ubiquitination and subsequent proteasomal degradation of target proteins. Controls sulfur metabolite repression, probably by mediating the inactivation or degradation of the metR transcription factor. The chain is E3 ubiquitin ligase complex SCF subunit sconC (sconC) from Arthroderma otae (Microsporum canis).